An 835-amino-acid polypeptide reads, in one-letter code: MIMHSNYDPNIIEKKWQRYWEEQHAYACDIDPNKKKYYVLEMWPYPSGNIHMGHVRNYSIGDVIARIKRMQGYNVLHPMGWDAFGLPAELAAIKHHTQPADWTYTNINEMRAQLKRLGYSYDWQREIATCDPDYYQWEQLFFVDCFEKGLVYRKKAPQNWCPSCNTVLANEQVIEGSCWRCDTSIIQKELTQWFLKITDYAEELLDDLTTLKYSWPDRVITMQENWLGKSTGVEISFPIESSQDFITIFTTRPDTIFGATAIILAPEHPILETLLNDTPQKEKLYNVIEKMRNMDRLERQSNLLTKEGIFIDRYCINPCSGDKIPIWIGNFVLADYGTGAIMAVPAHDQRDFDFCKKYNLPISIVIQPDELQINEHTIVEPWTGLGTLIHSGQFTGLTNKEAKEKITQYLEKIGKATRVVSWRLRDWNISRQRYWGTPIPIIYCKNCGVVSVPKNELPVILPTNITINEDGSSPLPQESSFIDCMCPQCGGIAKRETDTMDTFVDSSWYFARFVDPKNTKQPFDTSIAKYWLNVDQYIGGVEHAILHLLYSRFFTKLLRDLGYLPSNINEPFAKLLTQGMVIKDGSKMSKSKGNIVDPNQMINIYGADTIRLFCLFAAPPERDFDWSDSGIEGSYRFLHRVWRLFIDVQPHIHTTHAGNSTVIETTTALTKDVKRKEHITIKKVSEDIENKYQFNTAIASIMEFVNTLYLSKNELILTVEGKNILSSAIATVLTLLSPMTPHICEELWSYLGHSTSISLEPWPKWDPQALLKDVVTIVVQINGKVRNKFEVPMDLSKEELEHIIFNDTKITQYLEGKTIQKHIIIPNKIINIVTT.

The short motif at 44-54 (PYPSGNIHMGH) is the 'HIGH' region element. The 'KMSKS' region motif lies at 587–591 (KMSKS). Lys590 is a binding site for ATP.

This sequence belongs to the class-I aminoacyl-tRNA synthetase family.

It localises to the cytoplasm. The enzyme catalyses tRNA(Leu) + L-leucine + ATP = L-leucyl-tRNA(Leu) + AMP + diphosphate. In Lawsonia intracellularis (strain PHE/MN1-00), this protein is Leucine--tRNA ligase.